The primary structure comprises 63 residues: Protease 2 small chain (63 aa).

The Peptidase S8 domain maps to 11–63; it reads QWGLSGTYGIRANTAWDNGYQGQGKIIAVVDTGITDHPDLLANRTSPLGYDFI.

This sequence belongs to the peptidase S8 family. As to quaternary structure, heterodimer of a large and a small chain.

Its subcellular location is the secreted. The chain is Protease 2 small chain from Achromobacter lyticus.